A 183-amino-acid polypeptide reads, in one-letter code: Ubiquinol-cytochrome c reductase iron-sulfur subunit (183 aa).

The chain crosses the membrane as a helical span at residues 21 to 41; the sequence is LIYGTTAVGAVGVALAVWPFI. The Rieske domain maps to 88-181; sequence IVVARAVDPA…YAFTDDTTVL (94 aa). Residues Cys-121, His-123, Cys-145, and His-148 each coordinate [2Fe-2S] cluster. Residues Cys-126 and Cys-147 are joined by a disulfide bond.

Belongs to the Rieske iron-sulfur protein family. As to quaternary structure, the main subunits of complex b-c1 are: cytochrome b, cytochrome c1 and the Rieske protein. It depends on [2Fe-2S] cluster as a cofactor.

It localises to the cell inner membrane. It carries out the reaction a quinol + 2 Fe(III)-[cytochrome c](out) = a quinone + 2 Fe(II)-[cytochrome c](out) + 2 H(+)(out). In terms of biological role, component of the ubiquinol-cytochrome c reductase complex (complex III or cytochrome b-c1 complex), which is a respiratory chain that generates an electrochemical potential coupled to ATP synthesis. The sequence is that of Ubiquinol-cytochrome c reductase iron-sulfur subunit (petA) from Rhodospirillum rubrum.